The chain runs to 210 residues: Large ribosomal subunit protein uL4 (210 aa).

Positions H49–G76 are disordered. A compositionally biased stretch (basic residues) spans K63–G76.

Belongs to the universal ribosomal protein uL4 family. Part of the 50S ribosomal subunit.

In terms of biological role, one of the primary rRNA binding proteins, this protein initially binds near the 5'-end of the 23S rRNA. It is important during the early stages of 50S assembly. It makes multiple contacts with different domains of the 23S rRNA in the assembled 50S subunit and ribosome. Forms part of the polypeptide exit tunnel. The chain is Large ribosomal subunit protein uL4 from Thermodesulfovibrio yellowstonii (strain ATCC 51303 / DSM 11347 / YP87).